The following is a 131-amino-acid chain: Small ribosomal subunit protein uS8 (131 aa).

Belongs to the universal ribosomal protein uS8 family. In terms of assembly, part of the 30S ribosomal subunit. Contacts proteins S5 and S12.

Functionally, one of the primary rRNA binding proteins, it binds directly to 16S rRNA central domain where it helps coordinate assembly of the platform of the 30S subunit. The protein is Small ribosomal subunit protein uS8 of Chlorobium phaeovibrioides (strain DSM 265 / 1930) (Prosthecochloris vibrioformis (strain DSM 265)).